A 764-amino-acid polypeptide reads, in one-letter code: Probable glutamate--tRNA ligase, cytoplasmic (764 aa).

228–230 (RFP) is an L-glutamate binding site. Positions 233–242 (PSGYMHIGHC) match the 'HIGH' region motif. ATP is bound at residue histidine 238. L-glutamate is bound by residues aspartate 264, 404-408 (YDFAC), and arginine 422. ATP contacts are provided by residues glutamate 425 and 460 to 464 (LLSKR). The 'KMSKS' region signature appears at 460 to 464 (LLSKR).

The protein belongs to the class-I aminoacyl-tRNA synthetase family. Glutamate--tRNA ligase type 2 subfamily.

The protein localises to the cytoplasm. The catalysed reaction is tRNA(Glu) + L-glutamate + ATP = L-glutamyl-tRNA(Glu) + AMP + diphosphate. Its function is as follows. Catalyzes the attachment of glutamate to tRNA(Glu) in a two-step reaction: glutamate is first activated by ATP to form Glu-AMP and then transferred to the acceptor end of tRNA(Glu). In Dictyostelium discoideum (Social amoeba), this protein is Probable glutamate--tRNA ligase, cytoplasmic (gluS).